The primary structure comprises 66 residues: UPF0337 protein RPA4217 (66 aa).

The protein belongs to the UPF0337 (CsbD) family.

The protein is UPF0337 protein RPA4217 of Rhodopseudomonas palustris (strain ATCC BAA-98 / CGA009).